A 208-amino-acid polypeptide reads, in one-letter code: Thymidylate kinase (208 aa).

10–17 (GPEGSGKT) contributes to the ATP binding site.

Belongs to the thymidylate kinase family.

The catalysed reaction is dTMP + ATP = dTDP + ADP. In terms of biological role, phosphorylation of dTMP to form dTDP in both de novo and salvage pathways of dTTP synthesis. The chain is Thymidylate kinase from Bacillus cereus (strain AH187).